A 170-amino-acid polypeptide reads, in one-letter code: Small ribosomal subunit protein uS5 (170 aa).

The region spanning 12–75 (WSELLVSVRR…NAAKKSMIRV (64 aa)) is the S5 DRBM domain.

Belongs to the universal ribosomal protein uS5 family. Part of the 30S ribosomal subunit. Contacts proteins S4 and S8.

Functionally, with S4 and S12 plays an important role in translational accuracy. Located at the back of the 30S subunit body where it stabilizes the conformation of the head with respect to the body. The chain is Small ribosomal subunit protein uS5 from Wolbachia sp. subsp. Brugia malayi (strain TRS).